A 520-amino-acid polypeptide reads, in one-letter code: Cytochrome P450 716A67 (520 aa).

The chain crosses the membrane as a helical span at residues 4-24 (SLAIYYGIILITVTLGLVYTW). Cys466 contributes to the heme binding site.

It belongs to the cytochrome P450 family. It depends on heme as a cofactor.

The protein localises to the membrane. Its function is as follows. Catalyzes hydroxylation at the C-2 position of different intermediates of the hemolytic sapogenin biosynthetic pathway downstream of oleanolic acid synthesis. The protein is Cytochrome P450 716A67 of Medicago truncatula (Barrel medic).